The sequence spans 239 residues: Glucosamine-6-phosphate deaminase (239 aa).

Residue Asp62 is the Proton acceptor; for enolization step of the active site. Asn128 serves as the catalytic For ring-opening step. His130 functions as the Proton acceptor; for ring-opening step in the catalytic mechanism. The For ring-opening step role is filled by Glu135.

It belongs to the glucosamine/galactosamine-6-phosphate isomerase family. NagB subfamily.

It carries out the reaction alpha-D-glucosamine 6-phosphate + H2O = beta-D-fructose 6-phosphate + NH4(+). Its pathway is amino-sugar metabolism; N-acetylneuraminate degradation; D-fructose 6-phosphate from N-acetylneuraminate: step 5/5. Its function is as follows. Catalyzes the reversible isomerization-deamination of glucosamine 6-phosphate (GlcN6P) to form fructose 6-phosphate (Fru6P) and ammonium ion. This Lactobacillus helveticus (strain DPC 4571) protein is Glucosamine-6-phosphate deaminase.